Consider the following 308-residue polypeptide: Acetaldehyde dehydrogenase 2 (308 aa).

12–15 (SGNI) contributes to the NAD(+) binding site. Catalysis depends on cysteine 127, which acts as the Acyl-thioester intermediate. NAD(+) contacts are provided by residues 162–170 (SAGPGTRAN) and asparagine 281.

It belongs to the acetaldehyde dehydrogenase family.

The enzyme catalyses acetaldehyde + NAD(+) + CoA = acetyl-CoA + NADH + H(+). In Mycobacterium marinum (strain ATCC BAA-535 / M), this protein is Acetaldehyde dehydrogenase 2.